The following is a 135-amino-acid chain: Small ribosomal subunit protein uS8 (135 aa).

It belongs to the universal ribosomal protein uS8 family. As to quaternary structure, part of the 30S ribosomal subunit. Contacts proteins S5 and S12.

Its function is as follows. One of the primary rRNA binding proteins, it binds directly to 16S rRNA central domain where it helps coordinate assembly of the platform of the 30S subunit. The chain is Small ribosomal subunit protein uS8 from Cutibacterium acnes (strain DSM 16379 / KPA171202) (Propionibacterium acnes).